A 145-amino-acid polypeptide reads, in one-letter code: Cell wall teichoic acid glycosylation protein GtcA (145 aa).

The next 4 helical transmembrane spans lie at 21–41, 45–65, 91–111, and 122–142; these read IFMY…TFWL, ILNW…VLFA, FFGF…LLIS, and IWTN…IIFK.

The protein belongs to the GtrA family.

It localises to the cell membrane. In terms of biological role, involved in the decoration of cell wall teichoic acid with galactose and glucose. This is Cell wall teichoic acid glycosylation protein GtcA (gtcA) from Listeria monocytogenes.